The chain runs to 111 residues: Universal stress protein B (111 aa).

2 consecutive transmembrane segments (helical) span residues M1–R21 and F90–W110.

The protein belongs to the universal stress protein B family.

The protein resides in the cell inner membrane. The chain is Universal stress protein B from Photorhabdus laumondii subsp. laumondii (strain DSM 15139 / CIP 105565 / TT01) (Photorhabdus luminescens subsp. laumondii).